The primary structure comprises 388 residues: F-box protein At5g42460 (388 aa).

One can recognise an F-box domain in the interval Met-1–Gln-47.

This is F-box protein At5g42460 from Arabidopsis thaliana (Mouse-ear cress).